We begin with the raw amino-acid sequence, 122 residues long: Antitoxin protein TsiV3 (122 aa).

The N-terminal stretch at 1-24 (MNNLLSAYVTMLLILLSISGGAIA) is a signal peptide. 2 disulfide bridges follow: cysteine 28-cysteine 41 and cysteine 82-cysteine 100.

In terms of assembly, homodimer; dimerization is critical for inhibitory activity. Forms a heterotetramer with VgrG3 composed of one TsiV3 homodimer and two VgrG3 molecules.

Immunity protein that plays a role in preventing early activation of toxin VgrG3. This is Antitoxin protein TsiV3 from Vibrio cholerae serotype O1 (strain ATCC 39315 / El Tor Inaba N16961).